The sequence spans 180 residues: Putative 3-methyladenine DNA glycosylase (180 aa).

It belongs to the DNA glycosylase MPG family.

The protein is Putative 3-methyladenine DNA glycosylase of Ehrlichia chaffeensis (strain ATCC CRL-10679 / Arkansas).